A 581-amino-acid chain; its full sequence is Arginine--tRNA ligase (581 aa).

The short motif at 126 to 136 (PNLAKEMHVGH) is the 'HIGH' region element.

The protein belongs to the class-I aminoacyl-tRNA synthetase family. As to quaternary structure, monomer.

It is found in the cytoplasm. The enzyme catalyses tRNA(Arg) + L-arginine + ATP = L-arginyl-tRNA(Arg) + AMP + diphosphate. This is Arginine--tRNA ligase from Shewanella baltica (strain OS155 / ATCC BAA-1091).